The chain runs to 153 residues: 6,7-dimethyl-8-ribityllumazine synthase (153 aa).

Residues Phe22, 56–58 (AFE), and 80–82 (AVI) each bind 5-amino-6-(D-ribitylamino)uracil. 85 to 86 (AT) is a binding site for (2S)-2-hydroxy-3-oxobutyl phosphate. His88 functions as the Proton donor in the catalytic mechanism. Phe113 serves as a coordination point for 5-amino-6-(D-ribitylamino)uracil. Arg127 lines the (2S)-2-hydroxy-3-oxobutyl phosphate pocket.

This sequence belongs to the DMRL synthase family.

The catalysed reaction is (2S)-2-hydroxy-3-oxobutyl phosphate + 5-amino-6-(D-ribitylamino)uracil = 6,7-dimethyl-8-(1-D-ribityl)lumazine + phosphate + 2 H2O + H(+). The protein operates within cofactor biosynthesis; riboflavin biosynthesis; riboflavin from 2-hydroxy-3-oxobutyl phosphate and 5-amino-6-(D-ribitylamino)uracil: step 1/2. Catalyzes the formation of 6,7-dimethyl-8-ribityllumazine by condensation of 5-amino-6-(D-ribitylamino)uracil with 3,4-dihydroxy-2-butanone 4-phosphate. This is the penultimate step in the biosynthesis of riboflavin. This is 6,7-dimethyl-8-ribityllumazine synthase from Clostridium tetani (strain Massachusetts / E88).